A 295-amino-acid chain; its full sequence is Signal-transducing adaptor protein 1 (295 aa).

In terms of domain architecture, PH spans Pro25–Glu121. Tyr168 carries the post-translational modification Phosphotyrosine. Residues Ala177–Ser280 form the SH2 domain. The tract at residues Ser270–Ala295 is disordered.

As to quaternary structure, interacts with KIT and CSF1R. Interacts with URI1; the interaction is phosphorylation-dependent and occurs in a growth-dependent manner. In terms of processing, phosphorylated on tyrosine by TEC. Phosphorylated on tyrosine by KIT.

The protein resides in the nucleus. It is found in the cytoplasm. It localises to the mitochondrion. In BCR signaling, appears to function as a docking protein acting downstream of TEC and participates in a positive feedback loop by increasing the activity of TEC. This Homo sapiens (Human) protein is Signal-transducing adaptor protein 1 (STAP1).